The primary structure comprises 323 residues: Acetyl esterase (323 aa).

Residues 91 to 93 (HGG) carry the Involved in the stabilization of the negatively charged intermediate by the formation of the oxyanion hole motif. Catalysis depends on residues serine 165, aspartate 262, and histidine 292.

It belongs to the 'GDXG' lipolytic enzyme family. As to quaternary structure, homodimer. Interacts with MalT and MelA.

The protein resides in the cytoplasm. Its function is as follows. Displays esterase activity towards short chain fatty esters (acyl chain length of up to 8 carbons). Able to hydrolyze triacetylglycerol (triacetin) and tributyrylglycerol (tributyrin), but not trioleylglycerol (triolein) or cholesterol oleate. Negatively regulates MalT activity by antagonizing maltotriose binding. Inhibits MelA galactosidase activity. The protein is Acetyl esterase of Salmonella schwarzengrund (strain CVM19633).